The chain runs to 756 residues: Serine/threonine-protein kinase DCLK2 (756 aa).

Positions 1-44 (MASTRSIELEHFEERDKRPRPGSRRGAPSSSGGSSISGPKGNGL) are disordered. Over residues 7 to 19 (IELEHFEERDKRP) the composition is skewed to basic and acidic residues. Residues 24-43 (RRGAPSSSGGSSISGPKGNG) show a composition bias toward low complexity. Phosphothreonine is present on Thr-61. Doublecortin domains lie at 72–158 (KKAR…VDYT) and 196–279 (KLVT…AQDD). 2 stretches are compositionally biased toward low complexity: residues 301-311 (KYSGSRSPGFS) and 323-346 (TPSS…SPGS). Residues 301-375 (KYSGSRSPGF…GPELDRCLSP (75 aa)) are disordered. Residues 353–364 (ISAQGRSSSNVN) show a composition bias toward polar residues. Phosphoserine is present on Ser-361. Residues 393 to 650 (YRIGKVIGDG…AGEILSHPWV (258 aa)) form the Protein kinase domain. ATP is bound by residues 399 to 407 (IGDGNFAVV) and Lys-422. The active-site Proton acceptor is the Asp-514. Phosphoserine is present on Ser-646. Residue Thr-665 is modified to Phosphothreonine. The tract at residues 707–756 (QDSSRPSREQTSPVPPSAQEAPPPLESPRPPGPPATSGCDLAGTWRRHRD) is disordered. The segment covering 719 to 740 (PVPPSAQEAPPPLESPRPPGPP) has biased composition (pro residues).

It belongs to the protein kinase superfamily. CAMK Ser/Thr protein kinase family. CaMK subfamily. Binds to and stabilizes microtubules. Interacts with MAPK8IP1/JIP-1, MAPK8IP2/JIP-2, MAPK9/JNK2, PPP1R9B/NEURABIN-2 and actin. Post-translationally, autophosphorylated. In terms of tissue distribution, expressed in the central and peripheral nervous system including the brain, spinal cord, cranial and dorsal root ganglia and in the parasympathetic ganglia. Present in neurons, but not in glial cells, in most forebrain areas. Strong expression in the hippocampal CA1 pyramidal cell layer. Expressed in the photoreceptor sensory cilium complex and in eyes. Also detected in individual cells of the olfactory epithelium.

Its subcellular location is the cytoplasm. The protein resides in the cytoskeleton. It catalyses the reaction L-seryl-[protein] + ATP = O-phospho-L-seryl-[protein] + ADP + H(+). The catalysed reaction is L-threonyl-[protein] + ATP = O-phospho-L-threonyl-[protein] + ADP + H(+). Functionally, protein kinase with a significantly reduced Ca(2+)+/CAM affinity and dependence compared to other members of the CaMK family. May play a role in the down-regulation of CRE-dependent gene activation probably by phosphorylation of the CREB coactivator CRTC2/TORC2 and the resulting retention of TORC2 in the cytoplasm. The polypeptide is Serine/threonine-protein kinase DCLK2 (Dclk2) (Mus musculus (Mouse)).